Reading from the N-terminus, the 368-residue chain is Homoserine O-acetyltransferase (368 aa).

An AB hydrolase-1 domain is found at 43-346 (ILLEHALTGT…EYGHDAFLVE (304 aa)). The Nucleophile role is filled by Ser145. Arg212 provides a ligand contact to substrate. Active-site residues include Asp307 and His340. Substrate is bound at residue Asp341.

The protein belongs to the AB hydrolase superfamily. MetX family. Homodimer.

Its subcellular location is the cytoplasm. The catalysed reaction is L-homoserine + acetyl-CoA = O-acetyl-L-homoserine + CoA. It participates in amino-acid biosynthesis; L-methionine biosynthesis via de novo pathway; O-acetyl-L-homoserine from L-homoserine: step 1/1. Its function is as follows. Transfers an acetyl group from acetyl-CoA to L-homoserine, forming acetyl-L-homoserine. The protein is Homoserine O-acetyltransferase of Listeria innocua serovar 6a (strain ATCC BAA-680 / CLIP 11262).